Reading from the N-terminus, the 880-residue chain is 3-isopropylmalate dehydratase large subunit gloJ (880 aa).

3 residues coordinate [4Fe-4S] cluster: cysteine 457, cysteine 520, and cysteine 523.

The protein belongs to the aconitase/IPM isomerase family. LeuC type 2 subfamily. [4Fe-4S] cluster is required as a cofactor.

The enzyme catalyses (2R,3S)-3-isopropylmalate = (2S)-2-isopropylmalate. The protein operates within mycotoxin biosynthesis. 3-isopropylmalate dehydratase large subunit; part of the gene cluster that mediates the biosynthesis of pneumocandins, lipohexapeptides of the echinocandin family that prevent fungal cell wall formation by non-competitive inhibition of beta-1,3-glucan synthase. The 10,12-dimethylmyristoyl side chain is synthesized by the reducing polyketide synthase gloL/GLPKS4. The thioesterase gloN/GLHYD exclusively interacts with gloL/GLPKS4 to maintain turnover of the polyketide side chain. The 10R,12S-dimethylmyristic acid is then transferred to the first thiolation domain of the nonribosomal peptide synthetase gloA/GLNRPS4 by the acyl-AMP ligase gloD/GLligase, followed by its acylation to L-ornithine to trigger elongation of the cyclic hexapeptide. L-ornithine, 4R-hydroxyl-L-proline (generated from L-proline by the dioxygenase gloF/GLOXY2), 3S-hydroxyl-L-homotyrosine (generated by gloG/GLHtyB, gloH/GLHtyA, gloI/GLHtyC, gloJ/GLHtyD and hydroxylated at C-3 by the dioxygenase gloM/GLOXY1), 3R-hydroxyl-L-glutamine (generated from L-glutamine probably by the dioxygenase gloE/GLOXY3) and 3S-hydroxyl-L-proline (generated from L-proline by the dioxygenase gloF/GLOXY2 to yield pneumocandin B0), or 3S-hydroxyl-4S-methyl-L-proline (generated from L-leucine by the dioxygenase gloC/GLOXY4 to yield pneumocandin A0) are sequentially added to the growing chain. The last C domain of gloA/GLNRPS4 is proposed to be responsible for cyclization by condensation to form the peptide bond between L-ornithine and 3S-hydroxyl-4S-methyl-L-proline (for pneumocandin A0) or 3S-hydroxyl-L-proline (for pneumocandin B0). Finally, the subsequent C-4 hydroxylation of 3S-hydroxyl-L-homotyrosine and L-ornithine dihydroxylation at C-4 and C-5 are performed by the cytochrome P450 monooxygenases gloP/GLP450-1 and gloO/GLP450-2, respectively. This Glarea lozoyensis (strain ATCC 20868 / MF5171) protein is 3-isopropylmalate dehydratase large subunit gloJ.